The chain runs to 291 residues: Acetylglutamate kinase (291 aa).

Residues 64 to 65, Arg-86, and Asn-190 contribute to the substrate site; that span reads GG.

The protein belongs to the acetylglutamate kinase family. ArgB subfamily.

It is found in the cytoplasm. It carries out the reaction N-acetyl-L-glutamate + ATP = N-acetyl-L-glutamyl 5-phosphate + ADP. It functions in the pathway amino-acid biosynthesis; L-arginine biosynthesis; N(2)-acetyl-L-ornithine from L-glutamate: step 2/4. Catalyzes the ATP-dependent phosphorylation of N-acetyl-L-glutamate. This Leptospira borgpetersenii serovar Hardjo-bovis (strain L550) protein is Acetylglutamate kinase.